Consider the following 335-residue polypeptide: Coiled-coil domain-containing protein 68 (335 aa).

Residues 101–305 (QLLEMNKENE…KTQVALSSET (205 aa)) adopt a coiled-coil conformation.

Interacts with CEP170. Expressed in bone marrow, colon, small intestine, spleen, testis, trachea and cutaneous T-cell lymphoma (CTCL).

The protein localises to the cytoplasm. It localises to the cytoskeleton. The protein resides in the microtubule organizing center. Its subcellular location is the centrosome. It is found in the centriole. Its function is as follows. Centriolar protein required for centriole subdistal appendage assembly and microtubule anchoring in interphase cells. Together with CCDC120, cooperate with subdistal appendage components ODF2, NIN and CEP170 for hierarchical subdistal appendage assembly. The sequence is that of Coiled-coil domain-containing protein 68 (CCDC68) from Homo sapiens (Human).